The sequence spans 182 residues: T-cell surface glycoprotein CD3 gamma chain (182 aa).

The N-terminal stretch at 1 to 22 (MEQGKGLAGLFLVISLLQGTMA) is a signal peptide. At 23–116 (QQKEEKHLVK…CIELNMGTVS (94 aa)) the chain is on the extracellular side. The Ig-like domain occupies 37–94 (QGDGSVLLTCDFNEKTITWLKDGHRISPPNATKSTWNLGNGAKDPRGMYQCRGAKKKS). C46 and C87 are joined by a disulfide. An N-linked (GlcNAc...) asparagine glycan is attached at N66. The chain crosses the membrane as a helical span at residues 117–137 (GFIFAEIISIFFLAVGVYFIA). Residues 138-182 (GQDGVRQSRASDKQTLLQNEQVYQPLKDREYEQYSRLQGNQVRKK) are Cytoplasmic-facing. S145 carries the phosphoserine modification. The residue at position 148 (S148) is a Phosphoserine; by PKC. Positions 149-177 (DKQTLLQNEQVYQPLKDREYEQYSRLQGN) constitute an ITAM domain. The short motif at 153-154 (LL) is the Di-leucine motif element.

In terms of assembly, the TCR-CD3 complex is composed of a CD3D/CD3E and a CD3G/CD3E heterodimers that preferentially associate with TCRalpha and TCRbeta, respectively, to form TCRalpha/CD3E/CD3G and TCRbeta/CD3G/CD3E trimers. In turn, the hexamer interacts with CD3Z homodimer to form the TCR-CD3 complex. Alternatively, TCRalpha and TCRbeta can be replaced by TCRgamma and TCRdelta. Post-translationally, phosphorylated on Tyr residues after T-cell receptor triggering by LCK in association with CD4/CD8. Phosphorylated also by PKC; leading to the TCR complex down-regulation. Phosphorylated on Tyr residues after T-cell receptor triggering by LCK in association with CD4/CD8.

It localises to the cell membrane. Functionally, part of the TCR-CD3 complex present on T-lymphocyte cell surface that plays an essential role in adaptive immune response. When antigen presenting cells (APCs) activate T-cell receptor (TCR), TCR-mediated signals are transmitted across the cell membrane by the CD3 chains CD3D, CD3E, CD3G and CD3Z. All CD3 chains contain immunoreceptor tyrosine-based activation motifs (ITAMs) in their cytoplasmic domain. Upon TCR engagement, these motifs become phosphorylated by Src family protein tyrosine kinases LCK and FYN, resulting in the activation of downstream signaling pathways. In addition to this role of signal transduction in T-cell activation, CD3G plays an essential role in the dynamic regulation of TCR expression at the cell surface. Indeed, constitutive TCR cycling is dependent on the di-leucine-based (diL) receptor-sorting motif present in CD3G. The polypeptide is T-cell surface glycoprotein CD3 gamma chain (Cd3g) (Rattus norvegicus (Rat)).